The chain runs to 133 residues: Small ribosomal subunit protein uS8c (133 aa).

The protein belongs to the universal ribosomal protein uS8 family. In terms of assembly, part of the 30S ribosomal subunit.

The protein localises to the plastid. It is found in the chloroplast. One of the primary rRNA binding proteins, it binds directly to 16S rRNA central domain where it helps coordinate assembly of the platform of the 30S subunit. The protein is Small ribosomal subunit protein uS8c (rps8) of Pyropia yezoensis (Susabi-nori).